Here is a 265-residue protein sequence, read N- to C-terminus: HUWE1-associated protein modifying stress responses (265 aa).

3 disordered regions span residues 1–22 (MEEK…HWFS), 140–173 (GKAP…SVET), and 194–219 (ISMR…RRNG). The span at 147–172 (SSRAPPRLAMVSPSRSTPSETSSSVE) shows a compositional bias: low complexity.

The protein belongs to the HAPSTR1 family. Oligomer.

It localises to the nucleus. It is found in the cytoplasm. Functionally, acts as a central player within a network of stress response pathways promoting cellular adaptability. Functions as a negative regulator of TP53/P53 in the cellular response to telomere erosion and probably also DNA damage. The sequence is that of HUWE1-associated protein modifying stress responses from Danio rerio (Zebrafish).